A 156-amino-acid chain; its full sequence is Ribosomal RNA large subunit methyltransferase H (156 aa).

S-adenosyl-L-methionine-binding positions include Leu73, Gly104, and 123-128; that span reads LSPLTL.

It belongs to the RNA methyltransferase RlmH family. As to quaternary structure, homodimer.

The protein resides in the cytoplasm. It catalyses the reaction pseudouridine(1915) in 23S rRNA + S-adenosyl-L-methionine = N(3)-methylpseudouridine(1915) in 23S rRNA + S-adenosyl-L-homocysteine + H(+). Its function is as follows. Specifically methylates the pseudouridine at position 1915 (m3Psi1915) in 23S rRNA. The chain is Ribosomal RNA large subunit methyltransferase H from Yersinia pseudotuberculosis serotype O:1b (strain IP 31758).